Here is a 143-residue protein sequence, read N- to C-terminus: Transcription antitermination protein NusB (143 aa).

The protein belongs to the NusB family.

Its function is as follows. Involved in transcription antitermination. Required for transcription of ribosomal RNA (rRNA) genes. Binds specifically to the boxA antiterminator sequence of the ribosomal RNA (rrn) operons. The polypeptide is Transcription antitermination protein NusB (Clostridium botulinum (strain Kyoto / Type A2)).